The following is a 507-amino-acid chain: ATP synthase subunit alpha, chloroplastic (507 aa).

Residue G170 to T177 participates in ATP binding. Phosphothreonine is present on T257.

It belongs to the ATPase alpha/beta chains family. F-type ATPases have 2 components, CF(1) - the catalytic core - and CF(0) - the membrane proton channel. CF(1) has five subunits: alpha(3), beta(3), gamma(1), delta(1), epsilon(1). CF(0) has four main subunits: a, b, b' and c.

Its subcellular location is the plastid. The protein resides in the chloroplast thylakoid membrane. It catalyses the reaction ATP + H2O + 4 H(+)(in) = ADP + phosphate + 5 H(+)(out). Functionally, produces ATP from ADP in the presence of a proton gradient across the membrane. The alpha chain is a regulatory subunit. The protein is ATP synthase subunit alpha, chloroplastic of Aethionema cordifolium (Lebanon stonecress).